We begin with the raw amino-acid sequence, 518 residues long: Bifunctional purine biosynthesis protein PurH (518 aa).

An MGS-like domain is found at 1–144; it reads MSKRALISVS…KNHAAVTVVC (144 aa).

It belongs to the PurH family.

The catalysed reaction is (6R)-10-formyltetrahydrofolate + 5-amino-1-(5-phospho-beta-D-ribosyl)imidazole-4-carboxamide = 5-formamido-1-(5-phospho-D-ribosyl)imidazole-4-carboxamide + (6S)-5,6,7,8-tetrahydrofolate. It catalyses the reaction IMP + H2O = 5-formamido-1-(5-phospho-D-ribosyl)imidazole-4-carboxamide. It participates in purine metabolism; IMP biosynthesis via de novo pathway; 5-formamido-1-(5-phospho-D-ribosyl)imidazole-4-carboxamide from 5-amino-1-(5-phospho-D-ribosyl)imidazole-4-carboxamide (10-formyl THF route): step 1/1. It functions in the pathway purine metabolism; IMP biosynthesis via de novo pathway; IMP from 5-formamido-1-(5-phospho-D-ribosyl)imidazole-4-carboxamide: step 1/1. This chain is Bifunctional purine biosynthesis protein PurH, found in Lactococcus lactis subsp. cremoris (strain SK11).